The primary structure comprises 513 residues: L-arabinose transport ATP-binding protein AraG (513 aa).

ABC transporter domains are found at residues 6–243 (LEMR…GMVG) and 264–508 (VKNW…TKTA). 38–45 (GENGAGKS) is an ATP binding site.

Belongs to the ABC transporter superfamily.

It localises to the cell membrane. The enzyme catalyses L-arabinose(out) + ATP + H2O = L-arabinose(in) + ADP + phosphate + H(+). Its function is as follows. Part of the binding-protein-dependent transport system for L-arabinose. Probably responsible for energy coupling to the transport system. In Geobacillus stearothermophilus (Bacillus stearothermophilus), this protein is L-arabinose transport ATP-binding protein AraG (araG).